A 548-amino-acid polypeptide reads, in one-letter code: Peptide chain release factor 3 (548 aa).

Residues 23–290 enclose the tr-type G domain; it reads ERRRTFGIIS…ALLDWAPPPQ (268 aa). Residues 32 to 39, 100 to 104, and 154 to 157 contribute to the GTP site; these read SHPDAGKT, DTPGH, and NKMD.

Belongs to the TRAFAC class translation factor GTPase superfamily. Classic translation factor GTPase family. PrfC subfamily.

Its subcellular location is the cytoplasm. In terms of biological role, increases the formation of ribosomal termination complexes and stimulates activities of RF-1 and RF-2. It binds guanine nucleotides and has strong preference for UGA stop codons. It may interact directly with the ribosome. The stimulation of RF-1 and RF-2 is significantly reduced by GTP and GDP, but not by GMP. This Aromatoleum aromaticum (strain DSM 19018 / LMG 30748 / EbN1) (Azoarcus sp. (strain EbN1)) protein is Peptide chain release factor 3.